A 610-amino-acid chain; its full sequence is UvrABC system protein C (610 aa).

The GIY-YIG domain occupies 16 to 94 (SQPGVYRMYD…IKLYQPRYNV (79 aa)). One can recognise a UVR domain in the interval 204–239 (DQVLTQLIARMEKASQDLAFEEAARIRDQIQAVRRV).

This sequence belongs to the UvrC family. In terms of assembly, interacts with UvrB in an incision complex.

The protein resides in the cytoplasm. In terms of biological role, the UvrABC repair system catalyzes the recognition and processing of DNA lesions. UvrC both incises the 5' and 3' sides of the lesion. The N-terminal half is responsible for the 3' incision and the C-terminal half is responsible for the 5' incision. The polypeptide is UvrABC system protein C (Salmonella agona (strain SL483)).